The primary structure comprises 310 residues: 2-ketogluconate reductase (310 aa).

NADP(+) is bound by residues 151 to 152 and 227 to 229; these read HI and IAR. Active-site residues include arginine 229 and glutamate 258. Residue histidine 276 is the Proton donor of the active site.

It belongs to the D-isomer specific 2-hydroxyacid dehydrogenase family. In terms of assembly, homohexamer.

The enzyme catalyses D-gluconate + NADP(+) = 2-dehydro-D-gluconate + NADPH + H(+). Catalyzes the reduction of 2-keto-D-gluconate to gluconate. Can also catalyze the reduction of 2-keto-L-gulonate. Can use both NADH and NADPH efficiently, with a slight preference for NADPH. The polypeptide is 2-ketogluconate reductase (Gluconobacter oxydans (strain 621H) (Gluconobacter suboxydans)).